Consider the following 188-residue polypeptide: Elongation factor P-like protein (188 aa).

It belongs to the elongation factor P family.

The chain is Elongation factor P-like protein from Xylella fastidiosa (strain 9a5c).